The primary structure comprises 216 residues: Urease accessory protein UreG (216 aa).

Residue 25–32 (GPVGSGKT) participates in GTP binding.

The protein belongs to the SIMIBI class G3E GTPase family. UreG subfamily. Homodimer. UreD, UreF and UreG form a complex that acts as a GTP-hydrolysis-dependent molecular chaperone, activating the urease apoprotein by helping to assemble the nickel containing metallocenter of UreC. The UreE protein probably delivers the nickel.

The protein resides in the cytoplasm. Functionally, facilitates the functional incorporation of the urease nickel metallocenter. This process requires GTP hydrolysis, probably effectuated by UreG. The protein is Urease accessory protein UreG of Burkholderia pseudomallei (strain 1710b).